Here is a 1025-residue protein sequence, read N- to C-terminus: Multidrug resistance protein MdtC (1025 aa).

A run of 12 helical transmembrane segments spans residues F3 to L23, E333 to L353, I360 to C380, L387 to L407, V431 to L451, F463 to P483, L528 to P548, V853 to S873, V875 to L895, L897 to V917, P953 to G973, and I984 to V1004.

Belongs to the resistance-nodulation-cell division (RND) (TC 2.A.6) family. MdtC subfamily. In terms of assembly, part of a tripartite efflux system composed of MdtA, MdtB and MdtC. MdtC forms a heteromultimer with MdtB.

The protein resides in the cell inner membrane. Its function is as follows. The MdtABC tripartite complex confers resistance against novobiocin and deoxycholate. This Escherichia coli O81 (strain ED1a) protein is Multidrug resistance protein MdtC.